Here is a 212-residue protein sequence, read N- to C-terminus: Phosphoribosyl-dephospho-CoA transferase (212 aa).

Catalysis depends on residues Asp139 and Asp141.

It belongs to the MdcG family.

The enzyme catalyses apo-[malonate decarboxylase ACP] + 2'-(5''-triphospho-alpha-D-ribosyl)-3'-dephospho-CoA = holo-[malonate decarboxylase ACP] + diphosphate. In terms of biological role, transfers 2'-(5-triphosphoribosyl)-3'-dephosphocoenzyme-A to the apo-[acyl-carrier-protein] of the malonate decarboxylase to yield holo-[acyl-carrier-protein]. This chain is Phosphoribosyl-dephospho-CoA transferase, found in Azotobacter vinelandii (strain DJ / ATCC BAA-1303).